Consider the following 117-residue polypeptide: MTRIRRGYIARRRRTKIRLFASTFRGSHSRLTRTTTQQKIRALVSAHRDRGKQKRYFRRLWITRINAVIRDNRVFYSYSRLIHDLYKKQLLLNRKILAQIAISNRNCLYMISNEIIK.

It belongs to the bacterial ribosomal protein bL20 family.

It localises to the plastid. It is found in the chloroplast. Binds directly to 23S ribosomal RNA and is necessary for the in vitro assembly process of the 50S ribosomal subunit. It is not involved in the protein synthesizing functions of that subunit. The polypeptide is Large ribosomal subunit protein bL20c (Buxus microphylla (Littleleaf boxwood)).